The following is a 66-amino-acid chain: MYKLKTNRAAAKRFKFTKSGKIKRGCAFRRHILEKKSPKMKHQSRGMHVIHETDYNRVEKLLPYGG.

Belongs to the bacterial ribosomal protein bL35 family.

This chain is Large ribosomal subunit protein bL35, found in Leptospira biflexa serovar Patoc (strain Patoc 1 / Ames).